Reading from the N-terminus, the 62-residue chain is Large ribosomal subunit protein uL29 (62 aa).

Belongs to the universal ribosomal protein uL29 family.

In Cytophaga hutchinsonii (strain ATCC 33406 / DSM 1761 / CIP 103989 / NBRC 15051 / NCIMB 9469 / D465), this protein is Large ribosomal subunit protein uL29.